The primary structure comprises 121 residues: Basic phospholipase A2 homolog (121 aa).

7 disulfide bridges follow: Cys26-Cys115, Cys28-Cys44, Cys43-Cys95, Cys49-Cys121, Cys50-Cys88, Cys57-Cys81, and Cys75-Cys86.

The protein belongs to the phospholipase A2 family. Group II subfamily. K49 sub-subfamily. Homodimer. In terms of tissue distribution, expressed by the venom gland.

It is found in the secreted. Functionally, snake venom phospholipase A2 homolog that lacks enzymatic activity, but has myotoxic and cytolytic activities. This chain is Basic phospholipase A2 homolog, found in Metlapilcoatlus nummifer (Mexican jumping pitviper).